The sequence spans 274 residues: Large ribosomal subunit protein uL2 (274 aa).

The tract at residues 223 to 256 is disordered; the sequence is VVMNPVDHPHGGGEGKTGEGRHPVDPWGNLTKGY. Basic and acidic residues predominate over residues 229 to 246; sequence DHPHGGGEGKTGEGRHPV.

This sequence belongs to the universal ribosomal protein uL2 family. Part of the 50S ribosomal subunit. Forms a bridge to the 30S subunit in the 70S ribosome.

One of the primary rRNA binding proteins. Required for association of the 30S and 50S subunits to form the 70S ribosome, for tRNA binding and peptide bond formation. It has been suggested to have peptidyltransferase activity; this is somewhat controversial. Makes several contacts with the 16S rRNA in the 70S ribosome. The sequence is that of Large ribosomal subunit protein uL2 from Albidiferax ferrireducens (strain ATCC BAA-621 / DSM 15236 / T118) (Rhodoferax ferrireducens).